The chain runs to 166 residues: Ureidoglycolate lyase (166 aa).

The protein belongs to the ureidoglycolate lyase family. In terms of assembly, homodimer. Ni(2+) is required as a cofactor.

The enzyme catalyses (S)-ureidoglycolate = urea + glyoxylate. It participates in nitrogen metabolism; (S)-allantoin degradation. Catalyzes the catabolism of the allantoin degradation intermediate (S)-ureidoglycolate, generating urea and glyoxylate. Involved in the utilization of allantoin as nitrogen source. The sequence is that of Ureidoglycolate lyase from Rhizobium etli (strain ATCC 51251 / DSM 11541 / JCM 21823 / NBRC 15573 / CFN 42).